Here is a 143-residue protein sequence, read N- to C-terminus: D-aminoacyl-tRNA deacylase (143 aa).

The Gly-cisPro motif, important for rejection of L-amino acids signature appears at 135 to 136 (GP).

The protein belongs to the DTD family. As to quaternary structure, homodimer.

The protein resides in the cytoplasm. It carries out the reaction glycyl-tRNA(Ala) + H2O = tRNA(Ala) + glycine + H(+). It catalyses the reaction a D-aminoacyl-tRNA + H2O = a tRNA + a D-alpha-amino acid + H(+). Functionally, an aminoacyl-tRNA editing enzyme that deacylates mischarged D-aminoacyl-tRNAs. Also deacylates mischarged glycyl-tRNA(Ala), protecting cells against glycine mischarging by AlaRS. Acts via tRNA-based rather than protein-based catalysis; rejects L-amino acids rather than detecting D-amino acids in the active site. By recycling D-aminoacyl-tRNA to D-amino acids and free tRNA molecules, this enzyme counteracts the toxicity associated with the formation of D-aminoacyl-tRNA entities in vivo and helps enforce protein L-homochirality. This is D-aminoacyl-tRNA deacylase from Mycobacterium marinum (strain ATCC BAA-535 / M).